The sequence spans 419 residues: Interferon regulatory factor 3 (419 aa).

Phosphothreonine is present on T3. A DNA-binding region (IRF tryptophan pentad repeat) is located at residues 5–111; sequence KPRILPWLVS…DPHKVYEFVT (107 aa). S14 bears the Phosphoserine mark. T75 carries the post-translational modification Phosphothreonine. A phosphoserine mark is found at S97, S123, and S135. The tract at residues 140–419 is mediates interaction with ZDHHC11; that stretch reads PKLFDGLILG…DMDFQATGNI (280 aa). K188 is covalently cross-linked (Glycyl lysine isopeptide (Lys-Gly) (interchain with G-Cter in ISG15)). Residues 194–353 form an interaction with HERC5 region; that stretch reads EQWEFEVTAF…MWPQDQPWVK (160 aa). A phosphothreonine mark is found at T230, T237, and T246. Glycyl lysine isopeptide (Lys-Gly) (interchain with G-Cter in ISG15) cross-links involve residues K353 and K359. K359 is modified (N6-acetyllysine). At S378 the chain carries Phosphoserine. At S379 the chain carries Diphosphoserine. Residue S379 is modified to Phosphoserine; by TBK1. Position 388 is a phosphoserine; by IKKE (S388). At S390 the chain carries Phosphoserine. A Phosphothreonine modification is found at T396.

It belongs to the IRF family. As to quaternary structure, monomer. Homodimer; phosphorylation-induced. Interacts (when phosphorylated) with CREBBP. Interacts with MAVS (via phosphorylated pLxIS motif). Interacts with TICAM1 (via phosphorylated pLxIS motif). Interacts with STING1 (via phosphorylated pLxIS motif). Interacts with IKBKE and TBK1. Interacts with TICAM2. Interacts with RBCK1. Interacts with HERC5. Interacts with DDX3X; the interaction allows the phosphorylation and activation of IRF3 by IKBKE. Interacts with TRIM21 and ULK1, in the presence of TRIM21; this interaction leads to IRF3 degradation by autophagy. Interacts with RIOK3; RIOK3 probably mediates the interaction of TBK1 with IRF3. Interacts with ILRUN; the interaction inhibits IRF3 binding to its DNA consensus sequence. Interacts with LYAR; this interaction impairs IRF3 DNA-binding activity. Interacts with TRAF3. Interacts with ZDHHC11; ZDHHC11 recruits IRF3 to STING1 upon DNA virus infection and thereby promotes IRF3 activation. Interacts with HSP90AA1; the interaction mediates IRF3 association with TOMM70. Interacts with BCL2; the interaction decreases upon Sendai virus infection. Interacts with BAX; the interaction is direct, increases upon virus infection and mediates the formation of the apoptosis complex TOMM70:HSP90AA1:IRF3:BAX. Interacts with DDX56. Interacts with NBR1. Post-translationally, constitutively phosphorylated on many Ser/Thr residues. Activated following phosphorylation by TBK1 and IKBKE. Innate adapter proteins, such as MAVS, STING1 or TICAM1, are first activated by viral RNA, cytosolic DNA, and bacterial lipopolysaccharide (LPS), respectively, leading to activation of the kinases TBK1 and IKBKE. These kinases then phosphorylate the adapter proteins on the pLxIS motif, leading to recruitment of IRF3, thereby licensing IRF3 for phosphorylation by TBK1. Phosphorylation at Ser-379 is followed by pyrophosphorylation at the same residue, promoting phosphorylation at Ser-388. Phosphorylated IRF3 dissociates from the adapter proteins, dimerizes, and then enters the nucleus to induce IFNs. Pyrophosphorylated by UAP1 following phosphorylation at Ser-379 by TBK1. Pyrophosphorylation promotes subsequent phosphorylation at Ser-388, leading to homodimerization of IRF3. In terms of processing, acetylation at Lys-359 by KAT8 inhibits recruimtent to promoters and transcription factor activity. Acetylation by KAT8 is promoted by phosphorylation at Ser-388. Post-translationally, ubiquitinated; ubiquitination involves RBCK1 leading to proteasomal degradation. Polyubiquitinated; ubiquitination involves TRIM21 leading to proteasomal degradation. Ubiquitinated by UBE3C, leading to its degradation. Deubiquitinated by USP5 on both 'Lys-48'-linked unanchored and 'Lys-63'-linked anchored polyubiquitin, leading to inhibition of anti-RNA viral innate immunity. ISGylated by HERC5 resulting in sustained IRF3 activation and in the inhibition of IRF3 ubiquitination by disrupting PIN1 binding. The phosphorylation state of IRF3 does not alter ISGylation. In terms of processing, proteolytically cleaved by apoptotic caspases during apoptosis, leading to its inactivation. Cleavage by CASP3 during virus-induced apoptosis inactivates it, preventing cytokine overproduction.

The protein localises to the cytoplasm. Its subcellular location is the nucleus. It is found in the mitochondrion. With respect to regulation, in the absence of viral infection, maintained as a monomer in an autoinhibited state. Phosphorylation by TBK1 and IKBKE disrupts this autoinhibition leading to the liberation of the DNA-binding and dimerization activities and its nuclear localization where it can activate type I IFN and ISG genes. Phosphorylation and activation follow the following steps: innate adapter proteins, such as MAVS, STING1 or TICAM1, are first activated by viral RNA, cytosolic DNA and bacterial lipopolysaccharide (LPS), respectively, leading to activation of the kinases TBK1 and IKBKE. These kinases then phosphorylate the adapter proteins on their pLxIS motif, leading to recruitment of IRF3, thereby licensing IRF3 for phosphorylation by TBK1. Phosphorylated IRF3 dissociates from the adapter proteins, dimerizes, and then enters the nucleus to induce IFNs. Key transcriptional regulator of type I interferon (IFN)-dependent immune responses which plays a critical role in the innate immune response against DNA and RNA viruses. Regulates the transcription of type I IFN genes (IFN-alpha and IFN-beta) and IFN-stimulated genes (ISG) by binding to an interferon-stimulated response element (ISRE) in their promoters. Acts as a more potent activator of the IFN-beta (IFNB) gene than the IFN-alpha (IFNA) gene and plays a critical role in both the early and late phases of the IFNA/B gene induction. Found in an inactive form in the cytoplasm of uninfected cells and following viral infection, double-stranded RNA (dsRNA), or toll-like receptor (TLR) signaling, is phosphorylated by IKBKE and TBK1 kinases. This induces a conformational change, leading to its dimerization and nuclear localization and association with CREB binding protein (CREBBP) to form dsRNA-activated factor 1 (DRAF1), a complex which activates the transcription of the type I IFN and ISG genes. Can activate distinct gene expression programs in macrophages and can induce significant apoptosis in primary macrophages. This is Interferon regulatory factor 3 (Irf3) from Mus musculus (Mouse).